A 540-amino-acid polypeptide reads, in one-letter code: Chaperonin GroEL 1 (540 aa).

ATP is bound by residues 29-32 (TLGP), 86-90 (DGTTT), G413, 478-480 (NAA), and D494.

The protein belongs to the chaperonin (HSP60) family. In terms of assembly, forms a cylinder of 14 subunits composed of two heptameric rings stacked back-to-back. Interacts with the co-chaperonin GroES.

Its subcellular location is the cytoplasm. It catalyses the reaction ATP + H2O + a folded polypeptide = ADP + phosphate + an unfolded polypeptide.. Functionally, together with its co-chaperonin GroES, plays an essential role in assisting protein folding. The GroEL-GroES system forms a nano-cage that allows encapsulation of the non-native substrate proteins and provides a physical environment optimized to promote and accelerate protein folding. The protein is Chaperonin GroEL 1 of Mycobacterium sp. (strain JLS).